The following is a 397-amino-acid chain: Succinate--CoA ligase [ADP-forming] subunit beta (397 aa).

An ATP-grasp domain is found at 9–254 (KALLKSFGAP…KSEEDEKEIQ (246 aa)). ATP-binding positions include K46, 53 to 55 (GRG), E109, A112, and E117. 2 residues coordinate Mg(2+): N209 and D223. Residues N274 and 331–333 (GIM) each bind substrate.

It belongs to the succinate/malate CoA ligase beta subunit family. In terms of assembly, heterotetramer of two alpha and two beta subunits. It depends on Mg(2+) as a cofactor.

It catalyses the reaction succinate + ATP + CoA = succinyl-CoA + ADP + phosphate. The catalysed reaction is GTP + succinate + CoA = succinyl-CoA + GDP + phosphate. Its pathway is carbohydrate metabolism; tricarboxylic acid cycle; succinate from succinyl-CoA (ligase route): step 1/1. In terms of biological role, succinyl-CoA synthetase functions in the citric acid cycle (TCA), coupling the hydrolysis of succinyl-CoA to the synthesis of either ATP or GTP and thus represents the only step of substrate-level phosphorylation in the TCA. The beta subunit provides nucleotide specificity of the enzyme and binds the substrate succinate, while the binding sites for coenzyme A and phosphate are found in the alpha subunit. The chain is Succinate--CoA ligase [ADP-forming] subunit beta from Rhizobium rhizogenes (strain K84 / ATCC BAA-868) (Agrobacterium radiobacter).